The sequence spans 911 residues: DNA mismatch repair protein MutS (911 aa).

A disordered region spans residues 1-95; it reads MALQGNLFGD…PWSHHSQVTP (95 aa). Residues 23-42 show a composition bias toward basic and acidic residues; the sequence is KRQDEPDQLDDHELTQDAKQ. 727–734 is a binding site for ATP; it reads GPNASGKS.

It belongs to the DNA mismatch repair MutS family.

Its function is as follows. This protein is involved in the repair of mismatches in DNA. It is possible that it carries out the mismatch recognition step. This protein has a weak ATPase activity. The sequence is that of DNA mismatch repair protein MutS from Synechococcus sp. (strain CC9311).